A 313-amino-acid chain; its full sequence is Foldase protein PrsA (313 aa).

The first 20 residues, 1 to 20, serve as a signal peptide directing secretion; sequence MKKKLLAGAITLLSVATLAA. Cysteine 21 carries the N-palmitoyl cysteine lipid modification. Cysteine 21 carries the S-diacylglycerol cysteine lipid modification. The 99-residue stretch at 143–241 folds into the PpiC domain; sequence TPDVTAQIIR…SQYYIVKLTK (99 aa).

Belongs to the PrsA family.

The protein localises to the cell membrane. It carries out the reaction [protein]-peptidylproline (omega=180) = [protein]-peptidylproline (omega=0). Plays a major role in protein secretion by helping the post-translocational extracellular folding of several secreted proteins. In Streptococcus pneumoniae serotype 4 (strain ATCC BAA-334 / TIGR4), this protein is Foldase protein PrsA.